Reading from the N-terminus, the 142-residue chain is UPF0102 protein Bamb_0202 (142 aa).

Positions 1 to 23 (MCHAAPAAPASGRGLPHGGGNFS) are disordered.

It belongs to the UPF0102 family.

The sequence is that of UPF0102 protein Bamb_0202 from Burkholderia ambifaria (strain ATCC BAA-244 / DSM 16087 / CCUG 44356 / LMG 19182 / AMMD) (Burkholderia cepacia (strain AMMD)).